A 436-amino-acid chain; its full sequence is Adenine nucleotide transporter BT1, chloroplastic/amyloplastic/mitochondrial (436 aa).

Residues 83–135 (ASLAPPFPGSRPPGRRGRGSEEEEAEGRRHEEAAAAGRSEPEEGQGQDRQPAP) form a disordered region. Solcar repeat units follow at residues 132–216 (QPAP…AKKF), 227–311 (IPIP…LKRL), and 324–412 (VGPV…CKKI). 6 consecutive transmembrane segments (helical) span residues 137 to 158 (RLVS…LETI), 193 to 213 (AVNV…YDTA), 229 to 247 (IPTP…TLCT), 290 to 310 (SLIG…TLKR), 327 to 347 (VATL…TFPL), and 384 to 405 (LYRG…AFMC). Positions 417–428 (EDEEEEDEAGGG) are enriched in acidic residues. Positions 417–436 (EDEEEEDEAGGGEDDKKKVE) are disordered.

Belongs to the mitochondrial carrier (TC 2.A.29) family. As to expression, highly expressed in silks and endosperm of developing kernels. Expressed at intermediate levels in tassels and lower levels in stems and leaves.

Its subcellular location is the plastid. The protein localises to the chloroplast inner membrane. The protein resides in the amyloplast inner membrane. It is found in the mitochondrion inner membrane. Its activity is regulated as follows. Inhibited by mersalyl. Functionally, probable adenylate translocator that mediates transport of ADP-glucose into endosperm storage plastids during starch synthesis. Transports cytosolic ADP-glucose to amyloplast stroma by counter-exchange with ADP. This chain is Adenine nucleotide transporter BT1, chloroplastic/amyloplastic/mitochondrial (BT1), found in Zea mays (Maize).